A 229-amino-acid chain; its full sequence is Uracil-DNA glycosylase (229 aa).

The active-site Proton acceptor is the Asp64.

Belongs to the uracil-DNA glycosylase (UDG) superfamily. UNG family.

The protein localises to the cytoplasm. It catalyses the reaction Hydrolyzes single-stranded DNA or mismatched double-stranded DNA and polynucleotides, releasing free uracil.. Functionally, excises uracil residues from the DNA which can arise as a result of misincorporation of dUMP residues by DNA polymerase or due to deamination of cytosine. This is Uracil-DNA glycosylase from Escherichia coli O45:K1 (strain S88 / ExPEC).